Consider the following 110-residue polypeptide: Protein RnfH (110 aa).

Residues 90-110 (VDKTRREGSIEGRKWLPKDSR) are disordered.

It belongs to the UPF0125 (RnfH) family.

The protein is Protein RnfH of Burkholderia mallei (strain NCTC 10229).